The primary structure comprises 316 residues: MLSLSNLQNIIYNPTIPYVSTITEQLKPGSLIVIRGHVPKDSERFQVDFQHGNSLKPRADVAFHFNPRFKRSNCIVCNTLTNEKWGWEEITHDMPFRKEKSFEIVIMVLKNKFHVAVNGKHILLYAHRINPEKIDTLGIFGKVNIHSIGFRFSSDLQSMETSTLGLTQISKENIQKSGKLHLSLPFEARLNASMGPGRTVVVKGEVNTNATSFNVDLVAGRSRDIALHLNPRLNVKAFVRNSFLQDAWGEEERNITCFPFSSGMYFEMIIYCDVREFKVAVNGVHSLEYKHRFKDLSSIDTLAVDGDIRLLDVRSW.

Galectin domains are found at residues 18-151 (YVST…IGFR) and 186-316 (FEAR…VRSW). A carbohydrate-binding residues include R68, N78, and E88. 248–254 (WGEEERN) is an a beta-D-galactoside binding site.

As to quaternary structure, homodimer. Interacts with CALCOCO2/NDP52. Interacts with PDPN; the interaction is glycosylation-dependent; may participate in connection of the lymphatic endothelium to the surrounding extracellular matrix. In terms of tissue distribution, expressed in liver, kidney, cardiac muscle, lung, and brain.

Its subcellular location is the cytoplasmic vesicle. The protein resides in the cytoplasm. It is found in the cytosol. Its function is as follows. Beta-galactoside-binding lectin that acts as a sensor of membrane damage caused by infection and restricts the proliferation of infecting pathogens by targeting them for autophagy. Detects membrane rupture by binding beta-galactoside ligands located on the lumenal side of the endosome membrane; these ligands becoming exposed to the cytoplasm following rupture. Restricts infection by initiating autophagy via interaction with CALCOCO2/NDP52. Required to restrict infection of bacterial invasion such as S.typhimurium. Also required to restrict infection of Picornaviridae viruses. Has a marked preference for 3'-O-sialylated and 3'-O-sulfated glycans. The sequence is that of Galectin-8 (Lgals8) from Rattus norvegicus (Rat).